A 563-amino-acid polypeptide reads, in one-letter code: Cytochrome P450 monooxygenase phqL (563 aa).

A run of 3 helical transmembrane segments spans residues 20-40 (ENFS…IIIF), 52-72 (IPVG…FVPG), and 80-100 (ALWL…VSIL). An N-linked (GlcNAc...) asparagine glycan is attached at N279. The helical transmembrane segment at 362 to 382 (LVIFAGSGTVAVTIIGCLYFL) threads the bilayer. N419 is a glycosylation site (N-linked (GlcNAc...) asparagine). C502 is a heme binding site.

It belongs to the cytochrome P450 family. Heme serves as cofactor.

Its subcellular location is the membrane. The protein operates within alkaloid biosynthesis. Its function is as follows. Cytochrome P450 monooxygenase; part of the gene cluster that mediates the biosynthesis of paraherquamide, a fungal indole alkaloid that belongs to a family of natural products containing a characteristic bicyclo[2.2.2]diazaoctane core. The first steps in the biosynthesis of paraherquamide is the production of the beta-methyl-proline precursor from L-isoleucine. They require oxidation of a terminally hydroxylated L-isoleucine to the corresponding aldehyde by enzymes which have still to be identified. Spontaneous cyclization and dehydration would yield the 4-methyl pyrolline-5-carboxylic acid, which is then reduced by the pyrroline-5-carboxylate reductase phqD leading to the beta-methyl-proline precursor. The next step of paraherquamide biosynthesis involves coupling of beta-methyl-proline and L-tryptophan by the bimodular NRPS phqB, to produce a monooxopiperazine intermediate. The reductase (R) domain of phqB utilizes NADPH for hydride transfer to reduce the thioester bond of the T domain-tethered linear dipeptide to a hemithioaminal intermediate, which spontaneously cleaves the C-S bond to release the aldehyde product. This compound undergoes spontaneous cyclization and dehydration to give a dienamine which is reverse prenylated at C-2 by the reverse prenyltransferase phqJ. The other prenyltransferase present in the cluster, phqI may be a redundant gene in the pathway. During biosynthetic assembly, the key step to produce the polycyclic core is catalyzed by the bifunctional reductase and intramolecular [4+2] Diels-Alderase, phqE, resulting in formation of the [2.2.2] diazaoctane intermediate preparaherquamide. Following formation of preparaherquamide, an indole 2,3-epoxidation-initiated pinacol-like rearrangement is catalyzed by the phqK FAD-dependent monooxygenase. The prenyltransferase phqA, the cytochrome P450 monooxygenase phqL, and the FAD-linked oxidoreductase phqH (or the cytochrome P450 monooxygenase phqM), are proposed to be involved in the formation of the pyran ring. The FAD-dependent monooxygenase phqK is likely responsible for generation of the spiro-oxindole, and the N-methylation is likely mediated by the phqN methyltransferase leading to the isolable natural product paraherquamide F. However, the order of these biosynthetic steps has still to be determined. In late-stage paraherquamide biosynthesis, the third P450 monooxygenase, phqO, is probably responsible for the C-14 hydroxylation, transforming paraherquamide F to paraherquamide G, and paraherquamide E to the final product paraherquamide A. The expansion from the 6-membered ring pyran (in paraherquamides F and G) to the 7-membered dioxepin ring (in paraherquamides A and E) represents a poorly understood but intriguing process that probably involves the 2-oxoglutarate-dependent dioxygenase phqC. Finally, the remaining members of the paraherquamide cluster, including phqI as well as phqM (or phqH), do not have a clearly prescribed role and appear to be redundant. In Penicillium fellutanum, this protein is Cytochrome P450 monooxygenase phqL.